The chain runs to 116 residues: uncharacterized protein (116 aa).

An N-terminal signal peptide occupies residues 1–21 (MAPSTAMLIMGLLKLPRLRLA).

This is an uncharacterized protein from Saccharomyces cerevisiae (strain ATCC 204508 / S288c) (Baker's yeast).